Here is a 272-residue protein sequence, read N- to C-terminus: Cytochrome c oxidase subunit 3 (272 aa).

Helical transmembrane passes span Pro20–Met40, Gly45–Trp65, Gly89–Phe109, Val128–Gly148, Ala166–Phe186, Phe204–Ile224, and Tyr248–Phe268.

Belongs to the cytochrome c oxidase subunit 3 family. As to quaternary structure, component of the cytochrome c oxidase (complex IV, CIV), a multisubunit enzyme composed of a catalytic core of 3 subunits and several supernumerary subunits. The complex exists as a monomer or a dimer and forms supercomplexes (SCs) in the inner mitochondrial membrane with ubiquinol-cytochrome c oxidoreductase (cytochrome b-c1 complex, complex III, CIII).

Its subcellular location is the mitochondrion inner membrane. It carries out the reaction 4 Fe(II)-[cytochrome c] + O2 + 8 H(+)(in) = 4 Fe(III)-[cytochrome c] + 2 H2O + 4 H(+)(out). In terms of biological role, component of the cytochrome c oxidase, the last enzyme in the mitochondrial electron transport chain which drives oxidative phosphorylation. The respiratory chain contains 3 multisubunit complexes succinate dehydrogenase (complex II, CII), ubiquinol-cytochrome c oxidoreductase (cytochrome b-c1 complex, complex III, CIII) and cytochrome c oxidase (complex IV, CIV), that cooperate to transfer electrons derived from NADH and succinate to molecular oxygen, creating an electrochemical gradient over the inner membrane that drives transmembrane transport and the ATP synthase. Cytochrome c oxidase is the component of the respiratory chain that catalyzes the reduction of oxygen to water. Electrons originating from reduced cytochrome c in the intermembrane space (IMS) are transferred via the dinuclear copper A center (CU(A)) of subunit 2 and heme A of subunit 1 to the active site in subunit 1, a binuclear center (BNC) formed by heme A3 and copper B (CU(B)). The BNC reduces molecular oxygen to 2 water molecules using 4 electrons from cytochrome c in the IMS and 4 protons from the mitochondrial matrix. The polypeptide is Cytochrome c oxidase subunit 3 (COX3) (Pylaiella littoralis (Seaweed)).